A 202-amino-acid polypeptide reads, in one-letter code: Glycerol-3-phosphate acyltransferase (202 aa).

The next 6 helical transmembrane spans lie at 2 to 22, 54 to 74, 85 to 105, 120 to 140, 141 to 161, and 162 to 182; these read MIIVMLLLSYLIGAFPSGFVI, FLVTFLDIFKGFITVFFPLWL, FFTNGLIVGLFAILGHVYPVY, VVLGVNPILLLILAIIFFIVL, KIFKYVSLASIVAAICCVIGS, and LIIQDYILLVVSFLVSIILII.

This sequence belongs to the PlsY family. In terms of assembly, probably interacts with PlsX.

The protein localises to the cell membrane. It carries out the reaction an acyl phosphate + sn-glycerol 3-phosphate = a 1-acyl-sn-glycero-3-phosphate + phosphate. The protein operates within lipid metabolism; phospholipid metabolism. Catalyzes the transfer of an acyl group from acyl-phosphate (acyl-PO(4)) to glycerol-3-phosphate (G3P) to form lysophosphatidic acid (LPA). This enzyme utilizes acyl-phosphate as fatty acyl donor, but not acyl-CoA or acyl-ACP. The protein is Glycerol-3-phosphate acyltransferase of Staphylococcus aureus (strain Mu3 / ATCC 700698).